A 196-amino-acid polypeptide reads, in one-letter code: Glycerol-3-phosphate acyltransferase (196 aa).

The next 5 membrane-spanning stretches (helical) occupy residues 4–24 (LTLT…AILV), 56–76 (ATVL…AYFL), 80–100 (SLYL…PIFF), 114–134 (TLLP…VLVV), and 155–175 (VYFL…LILF).

It belongs to the PlsY family. In terms of assembly, probably interacts with PlsX.

Its subcellular location is the cell inner membrane. The enzyme catalyses an acyl phosphate + sn-glycerol 3-phosphate = a 1-acyl-sn-glycero-3-phosphate + phosphate. It participates in lipid metabolism; phospholipid metabolism. Its function is as follows. Catalyzes the transfer of an acyl group from acyl-phosphate (acyl-PO(4)) to glycerol-3-phosphate (G3P) to form lysophosphatidic acid (LPA). This enzyme utilizes acyl-phosphate as fatty acyl donor, but not acyl-CoA or acyl-ACP. This chain is Glycerol-3-phosphate acyltransferase, found in Colwellia psychrerythraea (strain 34H / ATCC BAA-681) (Vibrio psychroerythus).